The following is a 604-amino-acid chain: Glucoamylase 1 (604 aa).

The N-terminal stretch at 1–25 (MQLFNLPLKVSFFLVLSYFSLLVSA) is a signal peptide. Positions 26 to 115 (ASIPSSASVQ…EFYIKYEVSG (90 aa)) are adsorption to raw starch. One can recognise a CBM21 domain in the interval 26 to 130 (ASIPSSASVQ…NNNSANYQVS (105 aa)). The interval 116 to 604 (KTYYDNNNSA…SYAKAGAPAA (489 aa)) is starch degradation. Asn-122 carries N-linked (GlcNAc...) asparagine glycosylation. Positions 127–164 (YQVSTSKPTTTTATATTTTAPSTSTTTPPSRSEPATFP) are disordered. The segment covering 130 to 162 (STSKPTTTTATATTTTAPSTSTTTPPSRSEPAT) has biased composition (low complexity). N-linked (GlcNAc...) asparagine glycosylation is found at Asn-167, Asn-230, and Asn-236. Residue Trp-279 coordinates substrate. The Proton acceptor role is filled by Asp-336. Glu-339 (proton donor) is an active-site residue. N-linked (GlcNAc...) asparagine glycosylation occurs at Asn-564.

This sequence belongs to the glycosyl hydrolase 15 family.

The catalysed reaction is Hydrolysis of terminal (1-&gt;4)-linked alpha-D-glucose residues successively from non-reducing ends of the chains with release of beta-D-glucose.. This chain is Glucoamylase 1, found in Rhizopus oryzae (Mucormycosis agent).